Reading from the N-terminus, the 254-residue chain is DNA repair protein RecO (254 aa).

Belongs to the RecO family.

Its function is as follows. Involved in DNA repair and RecF pathway recombination. The protein is DNA repair protein RecO of Anaeromyxobacter sp. (strain K).